A 93-amino-acid polypeptide reads, in one-letter code: Phosphoribosyl-ATP pyrophosphatase (93 aa).

It belongs to the PRA-PH family.

Its subcellular location is the cytoplasm. The enzyme catalyses 1-(5-phospho-beta-D-ribosyl)-ATP + H2O = 1-(5-phospho-beta-D-ribosyl)-5'-AMP + diphosphate + H(+). It participates in amino-acid biosynthesis; L-histidine biosynthesis; L-histidine from 5-phospho-alpha-D-ribose 1-diphosphate: step 2/9. The chain is Phosphoribosyl-ATP pyrophosphatase from Corynebacterium aurimucosum (strain ATCC 700975 / DSM 44827 / CIP 107346 / CN-1) (Corynebacterium nigricans).